A 362-amino-acid polypeptide reads, in one-letter code: G-prodeshotein coupled receptor 4 (362 aa).

At 1–8 the chain is on the extracellular side; the sequence is MGNHTWEG. A glycan (N-linked (GlcNAc...) asparagine) is linked at Asn3. Residues 9 to 45 form a helical membrane-spanning segment; it reads CHVDSRVDHLFPPSLYIFVIGVGLPTNCLALWAAYRQ. 2 cysteine pairs are disulfide-bonded: Cys9–Cys258 and Cys90–Cys168. Residues 46–49 lie on the Cytoplasmic side of the membrane; that stretch reads VQQR. The helical transmembrane segment at 50–80 threads the bilayer; it reads NELGVYLMNLSIADLLYICTLPLWVDYFLHH. Topologically, residues 81-85 are extracellular; sequence DNWIH. Residues 86 to 121 traverse the membrane as a helical segment; that stretch reads GPGSCKLFGFIFYTNIYISIAFLCCISVDRYLAVAH. At 122–129 the chain is on the cytoplasmic side; it reads PLRFARLR. A helical membrane pass occupies residues 130–156; that stretch reads RVKTAVAVSSVVWATELGANSAPLFHD. Residues 157–172 are Extracellular-facing; the sequence is ELFRDRYNHTFCFEKF. An extracellular loop 2 (ECL2) region spans residues 157–172; that stretch reads ELFRDRYNHTFCFEKF. Asn164 carries an N-linked (GlcNAc...) asparagine glycan. A helical transmembrane segment spans residues 173-210; that stretch reads PMEGWVAWMNLYRVFVGFLFPWALMLLSYRGILRAVRG. Over 211–214 the chain is Cytoplasmic; that stretch reads SVST. Residues 215–250 traverse the membrane as a helical segment; the sequence is ERQEKAKIKRLALSLIAIVLVCFAPYHVLLLSRSAI. The Extracellular portion of the chain corresponds to 251-260; the sequence is YLGRPWDCGF. A helical membrane pass occupies residues 261–289; it reads EERVFSAYHSSLAFTSLNCVADPILYCLV. Topologically, residues 290–362 are cytoplasmic; it reads NEGARSDVAK…VQLKMLPPAQ (73 aa). Residues 335-362 are disordered; sequence AKAMTGSWAATPPSQGDQVQLKMLPPAQ.

This sequence belongs to the G-protein coupled receptor 1 family.

It is found in the cell membrane. Its activity is regulated as follows. Activated by a network of residues that connects an extracellular-facing cavity to Glu-145, a conserved charged residue buried in the transmembrane core of the receptor. Protonation likely drives conformational changes in extracellular loop 2 (ECL2), which stabilizes movement of transmembrane 3 (TM3) and a series of rearrangements that connect the extracellular-facing cavity to Glu-145, a residue only conserved in proton-sensing G-protein coupled receptors. In terms of biological role, proton-sensing G-protein coupled receptor activated by extracellular pH, which is required to monitor pH changes and generate adaptive reactions. Activated by an optimal pH of 6.8-7.2. Ligand binding causes a conformation change that triggers signaling via guanine nucleotide-binding proteins (G proteins) and modulates the activity of downstream effectors, such as adenylate cyclase. GPR4 is mainly coupled to G(s) G proteins and mediates activation of adenylate cyclase activity. May also couple with G(q) and G(12)/G(13) G proteins. Acts as a key regulator of respiratory sensitivity to CO2/H(+) in brain retrotrapezoid nucleus neurons: acts by mediating detection of protons generated by the formation of carbonic acid in the blood, an important mechanism to impulse to breathe. Also acts as a regulator of acid secretion in the kidney collecting duct by maintaining acid-base homeostasis in the kidney. Acidosis-induced GPR4 activation increases paracellular gap formation and permeability of vascular endothelial cells, possibly through the G(12)/G(13)/Rho GTPase signaling pathway. This chain is G-prodeshotein coupled receptor 4, found in Homo sapiens (Human).